A 570-amino-acid chain; its full sequence is Hydroxylamine reductase (570 aa).

Positions 5, 8, 17, and 23 each coordinate [4Fe-4S] cluster. The hybrid [4Fe-2O-2S] cluster site is built by histidine 266, glutamate 290, cysteine 334, cysteine 425, cysteine 453, cysteine 478, glutamate 513, and lysine 515. A Cysteine persulfide modification is found at cysteine 425.

Belongs to the HCP family. The cofactor is [4Fe-4S] cluster. Requires hybrid [4Fe-2O-2S] cluster as cofactor.

Its subcellular location is the cytoplasm. The enzyme catalyses A + NH4(+) + H2O = hydroxylamine + AH2 + H(+). In terms of biological role, catalyzes the reduction of hydroxylamine to form NH(3) and H(2)O. This Clostridium botulinum (strain ATCC 19397 / Type A) protein is Hydroxylamine reductase.